We begin with the raw amino-acid sequence, 262 residues long: Tryptophan synthase alpha chain (262 aa).

Active-site proton acceptor residues include glutamate 47 and aspartate 58.

This sequence belongs to the TrpA family. In terms of assembly, tetramer of two alpha and two beta chains.

It carries out the reaction (1S,2R)-1-C-(indol-3-yl)glycerol 3-phosphate + L-serine = D-glyceraldehyde 3-phosphate + L-tryptophan + H2O. It functions in the pathway amino-acid biosynthesis; L-tryptophan biosynthesis; L-tryptophan from chorismate: step 5/5. The alpha subunit is responsible for the aldol cleavage of indoleglycerol phosphate to indole and glyceraldehyde 3-phosphate. The chain is Tryptophan synthase alpha chain from Chromobacterium violaceum (strain ATCC 12472 / DSM 30191 / JCM 1249 / CCUG 213 / NBRC 12614 / NCIMB 9131 / NCTC 9757 / MK).